The sequence spans 89 residues: Envelope protein US9 (89 aa).

Basic and acidic residues predominate over residues 1-10; that stretch reads MTSRPADQDS. Positions 1 to 21 are disordered; that stretch reads MTSRPADQDSVRSSASVPLYP. Over 1-66 the chain is Intravirion; the sequence is MTSRPADQDS…RRRRTRCVGL (66 aa). Residues 20–23 carry the Internalization motif motif; sequence YPAA. The segment at 29-38 is acidic; the sequence is EAYYSESEDE. Phosphoserine; by host CK2 is present on residues Ser-33 and Ser-35. The chain crosses the membrane as a helical; Signal-anchor for type II membrane protein span at residues 67–87; sequence VIACLVVALLSGGFGALLVWL. Over 88–89 the chain is Virion surface; the sequence is LR.

This sequence belongs to the alphaherpesvirinae envelope protein US9 family. Phosphorylated on serines within the acidic cluster, possibly by host CK2. Phosphorylation determines whether endocytosed viral US9 traffics to the trans-Golgi network or recycles to the cell membrane.

It localises to the virion membrane. It is found in the host Golgi apparatus membrane. The protein localises to the host smooth endoplasmic reticulum membrane. The protein resides in the host cell membrane. In terms of biological role, essential for the anterograde spread of the infection throughout the host nervous system. Together with the gE/gI heterodimer, US9 is involved in the sorting and transport of viral structural components toward axon tips. The protein is Envelope protein US9 of Homo sapiens (Human).